A 354-amino-acid chain; its full sequence is Uroporphyrinogen decarboxylase (354 aa).

Residues 27-31 (RQAGR), Asp77, Tyr154, Thr209, and His327 contribute to the substrate site.

This sequence belongs to the uroporphyrinogen decarboxylase family. In terms of assembly, homodimer.

It localises to the cytoplasm. It carries out the reaction uroporphyrinogen III + 4 H(+) = coproporphyrinogen III + 4 CO2. It participates in porphyrin-containing compound metabolism; protoporphyrin-IX biosynthesis; coproporphyrinogen-III from 5-aminolevulinate: step 4/4. Its function is as follows. Catalyzes the decarboxylation of four acetate groups of uroporphyrinogen-III to yield coproporphyrinogen-III. This is Uroporphyrinogen decarboxylase from Pseudomonas putida (strain GB-1).